A 93-amino-acid polypeptide reads, in one-letter code: Small ribosomal subunit protein uS19 (93 aa).

Belongs to the universal ribosomal protein uS19 family.

In terms of biological role, protein S19 forms a complex with S13 that binds strongly to the 16S ribosomal RNA. In Helicobacter acinonychis (strain Sheeba), this protein is Small ribosomal subunit protein uS19.